Consider the following 294-residue polypeptide: Xyloglucan endotransglucosylase protein 34 (294 aa).

Positions 1 to 22 (MAAAYPWTLFLGMLVMVSGTMG) are cleaved as a signal peptide. In terms of domain architecture, GH16 spans 23 to 221 (AALRKPVDVA…WSKAPFIASY (199 aa)). Glu-107 serves as the catalytic Nucleophile. Glu-111 acts as the Proton donor in catalysis. Glu-111 contributes to the xyloglucan binding site. N-linked (GlcNAc...) asparagine glycosylation is present at Asn-115. Xyloglucan contacts are provided by residues 124–126 (QTN), 134–136 (DRE), 200–201 (DW), and Gly-205. Intrachain disulfides connect Cys-229/Cys-238 and Cys-275/Cys-288. Arg-280 lines the xyloglucan pocket.

Belongs to the glycosyl hydrolase 16 family. XTH group 1 subfamily. In terms of processing, contains at least one intrachain disulfide bond essential for its enzymatic activity. N-glycosylated. Contains N-acetylglucosamine and mannose. Glycosylation is not essential for its catalytic activity. As to expression, expressed in mature gelatinous (G) cell wall layer of the tension wood fibers. Highly expressed in the outer zone of the G layer close to the secondary S2 layer. Not expressed in the mature walls of the ray cells or vessel elements (at protein level). Highest expression in both the phloem/cambium and differentiating xylem of the mature stem containing primarily secondary cell wall forming cells, in root tips and young roots. Expressed at low levels in apical bud.

Its subcellular location is the secreted. It is found in the cell wall. The protein localises to the extracellular space. It localises to the apoplast. The protein resides in the cytoplasm. The enzyme catalyses breaks a beta-(1-&gt;4) bond in the backbone of a xyloglucan and transfers the xyloglucanyl segment on to O-4 of the non-reducing terminal glucose residue of an acceptor, which can be a xyloglucan or an oligosaccharide of xyloglucan.. Functionally, catalyzes xyloglucan endotransglycosylation (XET). Cleaves and religates xyloglucan polymers. Does not catalyze xyloglucan endohydrolysis (XEH). Involved in early phases of secondary (S) cell wall formation in fibers of the xylem and phloem vascular tissues of wood stems. May play a role in restructuring primary cell walls, possibly creating and reinforcing the connections between the primary and S cell wall layers. Functions in the gelatinous (G) layers of the tension wood fibers that are involved in bending of the wood stems. May play a role in G fiber shrinking by repairing broken xyloglucan cross-links between G and S2 cell wall layers via its XET activity to maintain connections between the layers. This is Xyloglucan endotransglucosylase protein 34 from Populus tremula x Populus tremuloides (Hybrid aspen).